The primary structure comprises 398 residues: Exodeoxyribonuclease 7 large subunit (398 aa).

Belongs to the XseA family. In terms of assembly, heterooligomer composed of large and small subunits.

Its subcellular location is the cytoplasm. It carries out the reaction Exonucleolytic cleavage in either 5'- to 3'- or 3'- to 5'-direction to yield nucleoside 5'-phosphates.. In terms of biological role, bidirectionally degrades single-stranded DNA into large acid-insoluble oligonucleotides, which are then degraded further into small acid-soluble oligonucleotides. In Salinibacter ruber (strain DSM 13855 / M31), this protein is Exodeoxyribonuclease 7 large subunit.